The chain runs to 107 residues: Protein TAP1 (107 aa).

The N-terminal stretch at 1-23 is a signal peptide; sequence MESKRVDVLVGLMLIMAIFGVHS.

Stamen.

The chain is Protein TAP1 (TAP1) from Antirrhinum majus (Garden snapdragon).